Here is a 58-residue protein sequence, read N- to C-terminus: Large ribosomal subunit protein uL30 (58 aa).

It belongs to the universal ribosomal protein uL30 family. As to quaternary structure, part of the 50S ribosomal subunit.

This Bacteroides fragilis (strain ATCC 25285 / DSM 2151 / CCUG 4856 / JCM 11019 / LMG 10263 / NCTC 9343 / Onslow / VPI 2553 / EN-2) protein is Large ribosomal subunit protein uL30.